The chain runs to 500 residues: NAD(P)H-quinone oxidoreductase chain 4, chloroplastic (500 aa).

Transmembrane regions (helical) follow at residues 4–24 (FPWL…MLFL), 35–55 (YTIC…CYNF), 87–107 (IGTI…AFPV), 113–130 (LFHF…GSFS), 134–154 (LLLF…LLSM), 167–187 (FILY…GISL), 211–231 (IILY…IPLH), 242–262 (HYST…YGLV), 272–292 (AHSL…IYAA), 305–325 (IAYS…SITD), 330–350 (GAIL…FLAG), 386–406 (LALP…GIIT), 416–436 (IFII…LLSM), and 462–482 (LFLS…PDFV).

It belongs to the complex I subunit 4 family.

The protein localises to the plastid. It is found in the chloroplast thylakoid membrane. It carries out the reaction a plastoquinone + NADH + (n+1) H(+)(in) = a plastoquinol + NAD(+) + n H(+)(out). It catalyses the reaction a plastoquinone + NADPH + (n+1) H(+)(in) = a plastoquinol + NADP(+) + n H(+)(out). This Aethionema cordifolium (Lebanon stonecress) protein is NAD(P)H-quinone oxidoreductase chain 4, chloroplastic.